The sequence spans 169 residues: Copper-resistant cuproprotein CopI (169 aa).

A signal peptide spans 1-20; sequence MIKKTLLVIALTFTVTTAFA. Residues His-98, Cys-153, His-158, and Met-163 each coordinate Cu(2+).

This sequence belongs to the CopI family.

The protein resides in the periplasm. Involved in copper tolerance. Mediates copper tolerance in aerobiosis. May also mediate tolerance under anaerobiosis. Not required for virulence or colonization in the mouse model. The chain is Copper-resistant cuproprotein CopI from Vibrio cholerae serotype O1 (strain ATCC 39315 / El Tor Inaba N16961).